The primary structure comprises 437 residues: tRNA-queuosine alpha-mannosyltransferase (437 aa).

It belongs to the glycosyltransferase group 1 family. Glycosyltransferase 4 subfamily.

It localises to the cytoplasm. The protein resides in the nucleus. It carries out the reaction queuosine(34) in tRNA(Asp) + GDP-alpha-D-mannose = O-4''-alpha-D-mannosylqueuosine(34) in tRNA(Asp) + GDP + H(+). Its function is as follows. Glycosyltransferase that specifically catalyzes mannosylation of cytoplasmic tRNA(Asp) modified with queuosine at position 34 (queuosine(34)). Mannosylates the cyclopentene moiety of queuosine(34) in tRNA(Asp) to form mannosyl-queuosine(34). Mannosylation of queuosine(34) in tRNA(Asp) is required to slow-down elongation at cognate codons, GAC and GAU, thereby regulating protein translation. This Xenopus laevis (African clawed frog) protein is tRNA-queuosine alpha-mannosyltransferase (gtdc1).